Here is a 335-residue protein sequence, read N- to C-terminus: Dolichyl-diphosphooligosaccharide--protein glycosyltransferase subunit MAGT1 (335 aa).

The N-terminal stretch at 1 to 29 (MAARWRFWCVSVTMVVALLIVCDVPSASA) is a signal peptide. At 30–184 (QRKKEMVLSE…DVNIRVIRPP (155 aa)) the chain is on the extracellular side. The Thioredoxin domain maps to 47–175 (WTNKRPVIRM…IARWIADRTD (129 aa)). Residue Asn71 is glycosylated (N-linked (GlcNAc...) asparagine). Cys87 and Cys90 are disulfide-bonded. A helical transmembrane segment spans residues 185-205 (NYAGPLMLGLLLAVIGGLVYL). Residues 206 to 209 (RRSN) lie on the Cytoplasmic side of the membrane. A helical transmembrane segment spans residues 210–230 (MEFLFNKTGWAFAALCFVLAM). The Extracellular segment spans residues 231–270 (TSGQMWNHIRGPPYAHKNPHTGHVNYIHGSSQAQFVAETH). The helical transmembrane segment at 271 to 291 (IVLLFNGGVTLGMVLLCEAAT) threads the bilayer. Topologically, residues 292 to 300 (SDMDIGKRK) are cytoplasmic. The helical transmembrane segment at 301–321 (IMCVAGIGLVVLFFSWMLSIF) threads the bilayer. The Extracellular segment spans residues 322 to 335 (RSKYHGYPYSFLMS).

It belongs to the OST3/OST6 family. As to quaternary structure, accessory component of the STT3B-containing form of the oligosaccharyltransferase (OST) complex. OST exists in two different complex forms which contain common core subunits RPN1, RPN2, OST48, OST4, DAD1 and TMEM258, either STT3A or STT3B as catalytic subunits, and form-specific accessory subunits. OST can form stable complexes with the Sec61 complex or with both the Sec61 and TRAP complexes. The association of TUSC3 or MAGT1 with the STT3B-containing complex seems to be mutually exclusvice. As to expression, ubiquitous. Expressed at very low levels in brain, lung and kidney.

It localises to the cell membrane. Its subcellular location is the endoplasmic reticulum. The protein localises to the endoplasmic reticulum membrane. Its pathway is protein modification; protein glycosylation. Accessory component of the STT3B-containing form of the N-oligosaccharyl transferase (OST) complex which catalyzes the transfer of a high mannose oligosaccharide from a lipid-linked oligosaccharide donor to an asparagine residue within an Asn-X-Ser/Thr consensus motif in nascent polypeptide chains. Involved in N-glycosylation of STT3B-dependent substrates. Specifically required for the glycosylation of a subset of acceptor sites that are near cysteine residues; in this function seems to act redundantly with TUSC3. In its oxidized form proposed to form transient mixed disulfides with a glycoprotein substrate to facilitate access of STT3B to the unmodified acceptor site. Also has oxidoreductase-independent functions in the STT3B-containing OST complex possibly involving substrate recognition. Could indirectly play a role in Mg(2+) transport in epithelial cells. The polypeptide is Dolichyl-diphosphooligosaccharide--protein glycosyltransferase subunit MAGT1 (Homo sapiens (Human)).